We begin with the raw amino-acid sequence, 465 residues long: VGFKAGVKDYKLTYYTPDYETKDTDILAAFRVTPQPGVPPEEAGAAVAAESSTGTWTTVWTDGLTSLDRYKGRCYDIEPVAGEENQYIAYVAYPLDLFEEGSVTNMFTSIVGNVFGFKALRALRLEDLRIPPAYSKTFQGPPHGIQVERDKLNKYGRPLLGCTIKPKLGLSAKNYGRAVYECLRGGLDFTKDDENVNSQPFMRWRDRFLFCAEALYKAQAETGEIKGHYLNATAGTCEEMIKRAVFARELGVPIVMHDYLTGGFTANTSLAHYCRDNGLLLHIHRAMHAVIDRQKNHGIHFRVLAKALRMSGGDHIHSGTVVGKLEGERDITLGFVDLLRDDFIEKDRSRGIYFTQDWVSLPGVLPVASGGIHVWHMPALTEIFGDDSVLQFGGGTLGHPWGNAPGAVANRVALEACVQARNEGRDLAREGNEIIREASKWSPELAAACEVWKEIKFEFQAMDTL.

Lys4 bears the N6,N6,N6-trimethyllysine mark. 2 residues coordinate substrate: Asn113 and Thr163. The active-site Proton acceptor is Lys165. A substrate-binding site is contributed by Lys167. 3 residues coordinate Mg(2+): Lys191, Asp193, and Glu194. At Lys191 the chain carries N6-carboxylysine. Catalysis depends on His284, which acts as the Proton acceptor. Positions 285, 317, and 369 each coordinate substrate.

It belongs to the RuBisCO large chain family. Type I subfamily. Heterohexadecamer of 8 large chains and 8 small chains; disulfide-linked. The disulfide link is formed within the large subunit homodimers. Mg(2+) is required as a cofactor. Post-translationally, the disulfide bond which can form in the large chain dimeric partners within the hexadecamer appears to be associated with oxidative stress and protein turnover.

Its subcellular location is the plastid. It localises to the chloroplast. The catalysed reaction is 2 (2R)-3-phosphoglycerate + 2 H(+) = D-ribulose 1,5-bisphosphate + CO2 + H2O. The enzyme catalyses D-ribulose 1,5-bisphosphate + O2 = 2-phosphoglycolate + (2R)-3-phosphoglycerate + 2 H(+). RuBisCO catalyzes two reactions: the carboxylation of D-ribulose 1,5-bisphosphate, the primary event in carbon dioxide fixation, as well as the oxidative fragmentation of the pentose substrate in the photorespiration process. Both reactions occur simultaneously and in competition at the same active site. The chain is Ribulose bisphosphate carboxylase large chain from Idesia polycarpa (Iigiri tree).